Consider the following 220-residue polypeptide: U1 small nuclear ribonucleoprotein C (220 aa).

Residues 4-36 (YYCDYCDIYLTHDSMNARKAHNSGRNHVANVRD) form a Matrin-type zinc finger. Composition is skewed to pro residues over residues 88–130 (PGPP…PFLP) and 147–165 (PPFP…PFRP). The segment at 88–220 (PGPPPPGAFP…HPDRLRMLGQ (133 aa)) is disordered. Over residues 166 to 200 (PMGMGMPPAPAQAQAQGSPMGMPQQGQQGTFTPTQ) the composition is skewed to low complexity. Residues 211-220 (HPDRLRMLGQ) show a composition bias toward basic and acidic residues.

The protein belongs to the U1 small nuclear ribonucleoprotein C family. U1 snRNP is composed of the 7 core Sm proteins B/B', D1, D2, D3, E, F and G that assemble in a heptameric protein ring on the Sm site of the small nuclear RNA to form the core snRNP, and at least 3 U1 snRNP-specific proteins U1-70K, U1-A and U1-C. U1-C interacts with U1 snRNA and the 5' splice-site region of the pre-mRNA.

The protein resides in the nucleus. Functionally, component of the spliceosomal U1 snRNP, which is essential for recognition of the pre-mRNA 5' splice-site and the subsequent assembly of the spliceosome. U1-C is directly involved in initial 5' splice-site recognition for both constitutive and regulated alternative splicing. The interaction with the 5' splice-site seems to precede base-pairing between the pre-mRNA and the U1 snRNA. Stimulates commitment or early (E) complex formation by stabilizing the base pairing of the 5' end of the U1 snRNA and the 5' splice-site region. In Cryptococcus neoformans var. neoformans serotype D (strain JEC21 / ATCC MYA-565) (Filobasidiella neoformans), this protein is U1 small nuclear ribonucleoprotein C.